Consider the following 42-residue polypeptide: Photosystem I reaction center subunit IX (42 aa).

The helical transmembrane segment at 7-27 threads the bilayer; sequence YLSTAPVLATLWFGFLAGLLI.

The protein belongs to the PsaJ family.

Its subcellular location is the plastid. The protein localises to the chloroplast thylakoid membrane. In terms of biological role, may help in the organization of the PsaE and PsaF subunits. This is Photosystem I reaction center subunit IX from Anthoceros angustus (Hornwort).